The chain runs to 302 residues: Arginase (302 aa).

The Mn(2+) site is built by His103, Asp126, His128, and Asp130. Substrate-binding positions include 128-132, 139-141, and Asp180; these read HGDLN and SGN. Residues Asp229 and Asp231 each coordinate Mn(2+). Substrate is bound by residues Thr243 and Glu274.

Belongs to the arginase family. It depends on Mn(2+) as a cofactor.

The catalysed reaction is L-arginine + H2O = urea + L-ornithine. It participates in nitrogen metabolism; urea cycle; L-ornithine and urea from L-arginine: step 1/1. This Staphylococcus aureus (strain MSSA476) protein is Arginase (arg).